The primary structure comprises 393 residues: UDP-sulfoquinovose synthase (393 aa).

NAD(+) is bound by residues 31–35, 74–75, arginine 100, and asparagine 118; these read DNLST and DI. Arginine 100 contributes to the substrate binding site. The substrate site is built by threonine 144 and tyrosine 182. Threonine 144 is a catalytic residue. 2 residues coordinate NAD(+): tyrosine 182 and lysine 186. The Proton acceptor role is filled by tyrosine 182. Lysine 186 is an active-site residue. Glutamine 209 serves as a coordination point for substrate. Residue valine 212 coordinates NAD(+). Residues 238 to 241, 253 to 255, and 326 to 328 contribute to the substrate site; these read VVNR, TVY, and RVE.

This sequence belongs to the NAD(P)-dependent epimerase/dehydratase family. It depends on NAD(+) as a cofactor.

It carries out the reaction sulfite + UDP-alpha-D-glucose + H(+) = UDP-alpha-D-6-sulfoquinovose + H2O. Catalyzes the biosynthesis of UDP-sulfoquinovose by the transfer of sulfite to UDP-glucose. Important for the assembly of the S-layer N-glycans. The reaction probably occurs through an NAD(+)-dependent oxidation/dehydration/enolization/sulfite addition process. In vitro, in the absence of sulfite, UDP-D-glucose is converted via UDP-4-keto-D-glucose to UDP-D-glucose-5,6-ene. This chain is UDP-sulfoquinovose synthase, found in Sulfolobus acidocaldarius (strain ATCC 33909 / DSM 639 / JCM 8929 / NBRC 15157 / NCIMB 11770).